Reading from the N-terminus, the 582-residue chain is Aspartate--tRNA(Asp/Asn) ligase (582 aa).

Position 177 (Glu177) interacts with L-aspartate. An aspartate region spans residues 201–204; that stretch reads QLFK. Arg223 is an L-aspartate binding site. ATP contacts are provided by residues 223-225 and Gln232; that span reads RDE. Position 447 (His447) interacts with L-aspartate. Glu481 serves as a coordination point for ATP. Arg488 contributes to the L-aspartate binding site. ATP is bound at residue 533–536; sequence GLDR.

Belongs to the class-II aminoacyl-tRNA synthetase family. Type 1 subfamily. As to quaternary structure, homodimer.

It is found in the cytoplasm. The enzyme catalyses tRNA(Asx) + L-aspartate + ATP = L-aspartyl-tRNA(Asx) + AMP + diphosphate. Its function is as follows. Aspartyl-tRNA synthetase with relaxed tRNA specificity since it is able to aspartylate not only its cognate tRNA(Asp) but also tRNA(Asn). Reaction proceeds in two steps: L-aspartate is first activated by ATP to form Asp-AMP and then transferred to the acceptor end of tRNA(Asp/Asn). In Chlamydia trachomatis serovar L2 (strain ATCC VR-902B / DSM 19102 / 434/Bu), this protein is Aspartate--tRNA(Asp/Asn) ligase.